The primary structure comprises 104 residues: ATP-dependent Clp protease adapter protein ClpS (104 aa).

The protein belongs to the ClpS family. In terms of assembly, binds to the N-terminal domain of the chaperone ClpA.

Its function is as follows. Involved in the modulation of the specificity of the ClpAP-mediated ATP-dependent protein degradation. In Burkholderia ambifaria (strain MC40-6), this protein is ATP-dependent Clp protease adapter protein ClpS.